The primary structure comprises 315 residues: Lamassu protein LmuA (315 aa).

Component of antiviral defense system Lamassu type I, composed of LmuA and LmuB. Expression of Lamassu type I in B.subtilis (strain BEST7003) confers resistance to phages phi3T, SpBeta and SPR. The sequence is that of Lamassu protein LmuA from Bacillus sp. (strain NCIM 5461 / CCTCC AB 2011126 / NIO-1130).